Here is a 68-residue protein sequence, read N- to C-terminus: MMSKLGVLLTICLLLFPLSVLPLDGDQPADQPAERMQDISAEQNPWFDPVKRCCNWPRCNVYLCGPCC.

An N-terminal signal peptide occupies residues 1–22 (MMSKLGVLLTICLLLFPLSVLP). The propeptide occupies 23-52 (LDGDQPADQPAERMQDISAEQNPWFDPVKR). 3 disulfides stabilise this stretch: C53/C68, C54/C64, and C59/C67.

It belongs to the conotoxin M superfamily. As to expression, expressed by the venom duct.

Its subcellular location is the secreted. In Conus regius (Crown cone), this protein is Conotoxin reg3.14.